Consider the following 157-residue polypeptide: CAPA peptides (157 aa).

An N-terminal signal peptide occupies residues methionine 1–alanine 21. Residues tyrosine 22–leucine 28 constitute a propeptide that is removed on maturation. Valine 42 is subject to Valine amide. A propeptide spanning residues alanine 45–valine 66 is cleaved from the precursor. Pyrrolidone carboxylic acid; partial is present on glutamine 69. Valine 76 bears the Valine amide mark. Leucine amide occurs at positions 85 and 117. A propeptide spanning residues alanine 120–asparagine 157 is cleaved from the precursor. The segment at glutamine 131 to asparagine 157 is disordered. The span at serine 134–arginine 151 shows a compositional bias: basic and acidic residues.

It belongs to the pyrokinin family. As to expression, CAPA-periviscerokinin 1: Expressed in corpora cardiaca (CC), corpora allata (CA), antennal lobe (AL) and gnathal ganglion (GNG) (at protein level). Expression detected in most animals in CC and CA and in some animals in AL and GNG (at protein level). CAPA-periviscerokinin 2: Expressed in corpora cardiaca (CC), corpora allata (CA), antennal lobe (AL) and gnathal ganglion (GNG) (at protein level). For non-pyroglutamate form, expression in AL detected in all animals, in CC, CA and GNG in most animals (at protein level). For pyroglutamate form, expression in CC and CA detected in most animals, in AL and GNG in some animals (at protein level). CAPA-periviscerokinin 3: Expressed in corpora cardiaca (CC), corpora allata (CA), antennal lobe (AL) and gnathal ganglion (GNG). Expression detected in most animals in CC and CA and in some animals in AL and GNG (at protein level). CAPA-precursor-related peptide 3: Expressed in corpora cardiaca (CC), corpora allata (CA), antennal lobe (AL) and gnathal ganglion (GNG) (at protein level). Expression in CC and CA detected in some animals, expression in Al and GNG detected in few animals (at protein level). CAPA-trypto-pyrokinin: Expressed in corpora cardiaca (CC), corpora allata (CA), antennal lobe (AL) and gnathal ganglion (GNG) (at protein level). Expression in CC, CA and GNG detected in most animals, in AL in some animals (at protein level).

It is found in the secreted. Functionally, myoactive. This Agrotis ipsilon (Black cutworm moth) protein is CAPA peptides.